A 383-amino-acid chain; its full sequence is Alkanesulfonate monooxygenase (383 aa).

Belongs to the SsuD family. Homotetramer.

The enzyme catalyses an alkanesulfonate + FMNH2 + O2 = an aldehyde + FMN + sulfite + H2O + 2 H(+). Catalyzes the desulfonation of aliphatic sulfonates. This is Alkanesulfonate monooxygenase from Erwinia pyrifoliae (strain DSM 12163 / CIP 106111 / Ep16/96).